The following is a 368-amino-acid chain: Phospho-N-acetylmuramoyl-pentapeptide-transferase (368 aa).

Helical transmembrane passes span 30-50, 72-92, 99-119, 139-159, 170-190, 201-221, 238-258, 264-286, and 345-365; these read AAAV…IKYL, LPTM…FLWA, VWLI…DDYM, VLLG…SVLL, LTID…TAVS, GLAS…AYLA, GGEI…FLWF, EIIM…ALLI, and KIVI…LMTL.

This sequence belongs to the glycosyltransferase 4 family. MraY subfamily. Mg(2+) serves as cofactor.

The protein resides in the cell inner membrane. The catalysed reaction is UDP-N-acetyl-alpha-D-muramoyl-L-alanyl-gamma-D-glutamyl-meso-2,6-diaminopimeloyl-D-alanyl-D-alanine + di-trans,octa-cis-undecaprenyl phosphate = di-trans,octa-cis-undecaprenyl diphospho-N-acetyl-alpha-D-muramoyl-L-alanyl-D-glutamyl-meso-2,6-diaminopimeloyl-D-alanyl-D-alanine + UMP. It participates in cell wall biogenesis; peptidoglycan biosynthesis. In terms of biological role, catalyzes the initial step of the lipid cycle reactions in the biosynthesis of the cell wall peptidoglycan: transfers peptidoglycan precursor phospho-MurNAc-pentapeptide from UDP-MurNAc-pentapeptide onto the lipid carrier undecaprenyl phosphate, yielding undecaprenyl-pyrophosphoryl-MurNAc-pentapeptide, known as lipid I. In Chlorobium limicola (strain DSM 245 / NBRC 103803 / 6330), this protein is Phospho-N-acetylmuramoyl-pentapeptide-transferase.